We begin with the raw amino-acid sequence, 360 residues long: UPF0284 protein APE_2029.1 (360 aa).

It belongs to the UPF0284 family.

The protein is UPF0284 protein APE_2029.1 of Aeropyrum pernix (strain ATCC 700893 / DSM 11879 / JCM 9820 / NBRC 100138 / K1).